We begin with the raw amino-acid sequence, 379 residues long: Small ribosomal subunit protein uS2cy (379 aa).

Positions 1-94 (MKLVQFFEIG…MGTSSNRAKS (94 aa)) are N-terminal extension. The segment at 83 to 106 (NQMGTSSNRAKSTDTPAVSTSQNV) is disordered.

It belongs to the universal ribosomal protein uS2 family.

The protein localises to the plastid. The protein resides in the chloroplast. In Tetradesmus obliquus (Green alga), this protein is Small ribosomal subunit protein uS2cy (rps2-2).